A 440-amino-acid polypeptide reads, in one-letter code: Xylose isomerase (440 aa).

Catalysis depends on residues histidine 101 and aspartate 104. Mg(2+)-binding residues include glutamate 232, glutamate 268, histidine 271, aspartate 296, aspartate 307, aspartate 309, and aspartate 339.

The protein belongs to the xylose isomerase family. Homotetramer. Mg(2+) serves as cofactor.

Its subcellular location is the cytoplasm. It carries out the reaction alpha-D-xylose = alpha-D-xylulofuranose. The protein is Xylose isomerase of Salmonella dublin (strain CT_02021853).